Reading from the N-terminus, the 277-residue chain is Chitosanase (277 aa).

Positions 1–35 (MKISMQKADFWKKAAISLLVFTMFFTLMMSETVFA) are cleaved as a signal peptide. Residue Glu54 is the Proton donor of the active site. The active-site Nucleophile is Asp70.

Belongs to the glycosyl hydrolase 46 family.

The protein resides in the secreted. The catalysed reaction is Endohydrolysis of beta-(1-&gt;4)-linkages between D-glucosamine residues in a partly acetylated chitosan.. In terms of biological role, aids in the defense against invading fungal pathogens by degrading their cell wall chitosan. This Bacillus subtilis (strain 168) protein is Chitosanase (csn).